The chain runs to 142 residues: Peptide methionine sulfoxide reductase MsrB (142 aa).

The MsrB domain maps to 2-125 (LKKDKSELTD…NSAAIQFIPY (124 aa)). The active-site Nucleophile is cysteine 114.

It belongs to the MsrB Met sulfoxide reductase family.

It catalyses the reaction L-methionyl-[protein] + [thioredoxin]-disulfide + H2O = L-methionyl-(R)-S-oxide-[protein] + [thioredoxin]-dithiol. In Staphylococcus aureus (strain Mu3 / ATCC 700698), this protein is Peptide methionine sulfoxide reductase MsrB.